The following is a 480-amino-acid chain: 3,6-anhydro-alpha-L-galactose dehydrogenase (480 aa).

NADP(+)-binding positions include W149 to N150, K173 to S176, and G226 to S227. The active-site Proton acceptor is E248. L249 is an NADP(+) binding site. Residue C282 is the Nucleophile of the active site. Position 383 (E383) interacts with NADP(+).

This sequence belongs to the aldehyde dehydrogenase family.

The enzyme catalyses 3,6-anhydro-alpha-L-galactopyranose + NADP(+) + H2O = 3,6-anhydro-L-galactonate + NADPH + 2 H(+). The catalysed reaction is 3,6-anhydro-alpha-L-galactopyranose + NAD(+) + H2O = 3,6-anhydro-L-galactonate + NADH + 2 H(+). Involved in the degradation of 3,6-anhydro-L-galactose, which is the major monomeric sugar of red macroalgae. Catalyzes the oxidation of 3,6-anhydro-L-galactose (AHG) to form 3,6-anhydrogalactonate (AHGA). In Vibrio sp. (strain EJY3), this protein is 3,6-anhydro-alpha-L-galactose dehydrogenase.